A 426-amino-acid chain; its full sequence is Dihydroorotase (426 aa).

2 residues coordinate Zn(2+): His-58 and His-60. Substrate contacts are provided by residues 60–62 and Asn-92; that span reads HLR. Zn(2+) contacts are provided by Asp-150, His-177, and His-230. Substrate is bound at residue Asn-276. Asp-303 contacts Zn(2+). The active site involves Asp-303. Substrate-binding positions include His-307 and 321–322; that span reads FG.

It belongs to the metallo-dependent hydrolases superfamily. DHOase family. Class I DHOase subfamily. Zn(2+) is required as a cofactor.

It carries out the reaction (S)-dihydroorotate + H2O = N-carbamoyl-L-aspartate + H(+). Its pathway is pyrimidine metabolism; UMP biosynthesis via de novo pathway; (S)-dihydroorotate from bicarbonate: step 3/3. Catalyzes the reversible cyclization of carbamoyl aspartate to dihydroorotate. This chain is Dihydroorotase, found in Listeria monocytogenes serotype 4b (strain F2365).